The primary structure comprises 622 residues: 1-deoxy-D-xylulose-5-phosphate synthase (622 aa).

Residues His80 and 121–123 (GHS) contribute to the thiamine diphosphate site. Residue Asp152 participates in Mg(2+) binding. Residues 153–154 (GA), Asn181, Tyr288, and Glu369 each bind thiamine diphosphate. Asn181 provides a ligand contact to Mg(2+).

This sequence belongs to the transketolase family. DXPS subfamily. Homodimer. The cofactor is Mg(2+). Thiamine diphosphate is required as a cofactor.

The enzyme catalyses D-glyceraldehyde 3-phosphate + pyruvate + H(+) = 1-deoxy-D-xylulose 5-phosphate + CO2. The protein operates within metabolic intermediate biosynthesis; 1-deoxy-D-xylulose 5-phosphate biosynthesis; 1-deoxy-D-xylulose 5-phosphate from D-glyceraldehyde 3-phosphate and pyruvate: step 1/1. Catalyzes the acyloin condensation reaction between C atoms 2 and 3 of pyruvate and glyceraldehyde 3-phosphate to yield 1-deoxy-D-xylulose-5-phosphate (DXP). The sequence is that of 1-deoxy-D-xylulose-5-phosphate synthase from Psychromonas ingrahamii (strain DSM 17664 / CCUG 51855 / 37).